Here is a 652-residue protein sequence, read N- to C-terminus: MSNRRQTRAQAQQFIDTLTPLQHPNSEKVYLTGSREDLRVGMRQILQSDTLVGGTEADPILESNPPLKVYDCAGPYSDPDAEINVRAGLNKFRQSWIEERADTEQLAGVSSGFTQQRLADDGLDHLRFDSLLPPRRAQSGKRVTQLHYARNGIITPEMEYIAIRENMEQAGITDPVLRQKAKGESFGASIEQVITPEFVRQEVARGRAIIPLNINHPEAEPMIIGRNFLVKVNANIGNSAVTSSIEEEVEKLVWSTRWGADTVMDLSTGRYIHETREWIIRNSPVPIGTVPIYQALEKVNGVAEDLSWEVFRDTLVEQAEQGVDYFTIHAGVLLRYVPMTAKRVTGIVSRGGSIMAKWCLSHHSENFLYEHFTEICELCAAYDVSLSLGDGMRPGSIADANDEAQFSELETLGELVKIAWEYDVQTIIEGPGHIPMNLIKENMDKQLALCDEAPFYTLGPQTTDIAPGYDHFTSGIGAAMIAWYGCAMLCYVTPKEHLGLPNKEDVKQGLIAYKIAAHAGDVAKGHPTAQIRDNALSKARFEFRWEDQYNLGLDPETARAYHDESLPQESAKVAHFCSMCGPKFCSMKISQEVRDYAASQEVELQSHASYQAKSASEIETGMAQMSAEFKAKGAELYHETAVVDEELADAEA.

Substrate is bound by residues asparagine 235, methionine 264, tyrosine 293, histidine 329, 349–351, 390–393, and glutamate 429; these read SRG and DGMR. Residue histidine 433 coordinates Zn(2+). Tyrosine 456 contributes to the substrate binding site. Residue histidine 497 participates in Zn(2+) binding. 3 residues coordinate [4Fe-4S] cluster: cysteine 577, cysteine 580, and cysteine 585.

The protein belongs to the ThiC family. In terms of assembly, homodimer. [4Fe-4S] cluster serves as cofactor.

It catalyses the reaction 5-amino-1-(5-phospho-beta-D-ribosyl)imidazole + S-adenosyl-L-methionine = 4-amino-2-methyl-5-(phosphooxymethyl)pyrimidine + CO + 5'-deoxyadenosine + formate + L-methionine + 3 H(+). Its pathway is cofactor biosynthesis; thiamine diphosphate biosynthesis. Functionally, catalyzes the synthesis of the hydroxymethylpyrimidine phosphate (HMP-P) moiety of thiamine from aminoimidazole ribotide (AIR) in a radical S-adenosyl-L-methionine (SAM)-dependent reaction. The polypeptide is Phosphomethylpyrimidine synthase (Shewanella woodyi (strain ATCC 51908 / MS32)).